Here is a 269-residue protein sequence, read N- to C-terminus: UPF0739 protein C1orf74 (269 aa).

Belongs to the UPF0739 family.

In Homo sapiens (Human), this protein is UPF0739 protein C1orf74 (C1orf74).